The chain runs to 542 residues: Polysialoglycoprotein (542 aa).

Residues 1 to 21 form the signal peptide; that stretch reads MIMGGVRELLLVVMTVGVVKV. The propeptide occupies 22-120; sequence SCYPVGKSQK…TSEAATGPSG (99 aa). Positions 70–542 are disordered; it reads EEYLETNEVE…GPSGDDAMDI (473 aa). The segment covering 78-95 has biased composition (polar residues); the sequence is VESQASPNHGSSPANDAL. Basic and acidic residues predominate over residues 97–106; it reads SEEKLRRVSS. Over residues 107–116 the composition is skewed to low complexity; sequence DDAATSEAAT. Repeat copies occupy residues 121–133, 134–146, 147–159, 160–172, 173–185, 186–198, 199–211, 212–224, 225–237, 238–250, 251–263, 264–276, 277–289, 290–302, 303–315, 316–328, 329–341, 342–354, 355–367, 368–380, 381–393, 394–406, 407–419, 420–432, 433–445, 446–458, 459–471, 472–484, 485–497, 498–510, 511–523, and 524–536. The interval 121–536 is 32 X 13 AA tandem repeats of D-D-A-T-S-E-A-A-T-G-P-S-G; sequence DDATSEAATG…TSEAATGPSG (416 aa). Thr-124 carries O-linked (GalNAc...) threonine glycosylation. Ser-125 is a glycosylation site (O-linked (GalNAc...) serine). Residues Thr-129 and Thr-137 are each glycosylated (O-linked (GalNAc...) threonine). Ser-138 carries an O-linked (GalNAc...) serine glycan. 2 O-linked (GalNAc...) threonine glycosylation sites follow: Thr-142 and Thr-150. A glycan (O-linked (GalNAc...) serine) is linked at Ser-151. Residues Thr-155 and Thr-163 are each glycosylated (O-linked (GalNAc...) threonine). Ser-164 carries O-linked (GalNAc...) serine glycosylation. O-linked (GalNAc...) threonine glycans are attached at residues Thr-168 and Thr-176. O-linked (GalNAc...) serine glycosylation is present at Ser-177. Residues Thr-181 and Thr-189 are each glycosylated (O-linked (GalNAc...) threonine). Ser-190 carries O-linked (GalNAc...) serine glycosylation. O-linked (GalNAc...) threonine glycosylation is found at Thr-194 and Thr-202. Ser-203 carries an O-linked (GalNAc...) serine glycan. 2 O-linked (GalNAc...) threonine glycosylation sites follow: Thr-207 and Thr-215. Residue Ser-216 is glycosylated (O-linked (GalNAc...) serine). 2 O-linked (GalNAc...) threonine glycosylation sites follow: Thr-220 and Thr-228. Residue Ser-229 is glycosylated (O-linked (GalNAc...) serine). Thr-233 and Thr-241 each carry an O-linked (GalNAc...) threonine glycan. An O-linked (GalNAc...) serine glycan is attached at Ser-242. Thr-246 and Thr-254 each carry an O-linked (GalNAc...) threonine glycan. Ser-255 carries O-linked (GalNAc...) serine glycosylation. Residues Thr-259 and Thr-267 are each glycosylated (O-linked (GalNAc...) threonine). Ser-268 is a glycosylation site (O-linked (GalNAc...) serine). O-linked (GalNAc...) threonine glycosylation is found at Thr-272 and Thr-280. An O-linked (GalNAc...) serine glycan is attached at Ser-281. O-linked (GalNAc...) threonine glycans are attached at residues Thr-285 and Thr-293. Residue Ser-294 is glycosylated (O-linked (GalNAc...) serine). O-linked (GalNAc...) threonine glycosylation is found at Thr-298 and Thr-306. Residue Ser-307 is glycosylated (O-linked (GalNAc...) serine). 2 O-linked (GalNAc...) threonine glycosylation sites follow: Thr-311 and Thr-319. O-linked (GalNAc...) serine glycosylation is present at Ser-320. 2 O-linked (GalNAc...) threonine glycosylation sites follow: Thr-324 and Thr-332. Residue Ser-333 is glycosylated (O-linked (GalNAc...) serine). O-linked (GalNAc...) threonine glycans are attached at residues Thr-337 and Thr-345. O-linked (GalNAc...) serine glycosylation is present at Ser-346. Residues Thr-350 and Thr-358 are each glycosylated (O-linked (GalNAc...) threonine). An O-linked (GalNAc...) serine glycan is attached at Ser-359. 2 O-linked (GalNAc...) threonine glycosylation sites follow: Thr-363 and Thr-371. Residue Ser-372 is glycosylated (O-linked (GalNAc...) serine). Thr-376 and Thr-384 each carry an O-linked (GalNAc...) threonine glycan. A glycan (O-linked (GalNAc...) serine) is linked at Ser-385. Thr-389 and Thr-397 each carry an O-linked (GalNAc...) threonine glycan. The O-linked (GalNAc...) serine glycan is linked to Ser-398. Thr-402 and Thr-410 each carry an O-linked (GalNAc...) threonine glycan. The O-linked (GalNAc...) serine glycan is linked to Ser-411. O-linked (GalNAc...) threonine glycosylation is found at Thr-415 and Thr-423. Ser-424 carries O-linked (GalNAc...) serine glycosylation. Thr-428 and Thr-436 each carry an O-linked (GalNAc...) threonine glycan. O-linked (GalNAc...) serine glycosylation occurs at Ser-437. Thr-441 and Thr-449 each carry an O-linked (GalNAc...) threonine glycan. Ser-450 carries an O-linked (GalNAc...) serine glycan. 2 O-linked (GalNAc...) threonine glycosylation sites follow: Thr-454 and Thr-462. Residue Ser-463 is glycosylated (O-linked (GalNAc...) serine). O-linked (GalNAc...) threonine glycans are attached at residues Thr-467 and Thr-475. O-linked (GalNAc...) serine glycosylation is present at Ser-476. O-linked (GalNAc...) threonine glycans are attached at residues Thr-480 and Thr-488. The O-linked (GalNAc...) serine glycan is linked to Ser-489. O-linked (GalNAc...) threonine glycosylation is found at Thr-493 and Thr-501. O-linked (GalNAc...) serine glycosylation occurs at Ser-502. Residues Thr-506 and Thr-514 are each glycosylated (O-linked (GalNAc...) threonine). O-linked (GalNAc...) serine glycosylation occurs at Ser-515. Thr-519 and Thr-527 each carry an O-linked (GalNAc...) threonine glycan. Residue Ser-528 is glycosylated (O-linked (GalNAc...) serine). Thr-532 carries an O-linked (GalNAc...) threonine glycan. Residues 537-542 constitute a propeptide that is removed on maturation; sequence DDAMDI.

Most sialic acid residues exist in the form of polysialyl groups partly capped with deaminoneuraminic acid. As to expression, cortical alveoli of immature ovaries.

Its function is as follows. In response to egg activation, PSGP is discharged by exocytosis into the perivitelline space, where it undergoes rapid proteolysis into glycotridecapeptides. During fertilization and/or early development the glycotridecapeptides prevent polyspermy or are involved in the formation of a fertilization membrane. The protein is Polysialoglycoprotein of Oncorhynchus mykiss (Rainbow trout).